Consider the following 343-residue polypeptide: Transmembrane protein 82 (343 aa).

8 helical membrane passes run 30-50 (GLIGALGVLVLNSLLKVYFFV), 77-97 (LAGLALFLTVVGSRVAALVVL), 121-141 (LQLYLLCQYSLGCGLTCGLSF), 145-167 (GAPHRTLNLLLSLGLATLLGLGA), 203-223 (LLGRALAIAFAVGDLAAVALI), 233-252 (AMRFWTPLTICYTLLVIYMQ), 263-283 (SQVQTVLVRMGGLFVLLLTVG), and 285-305 (WLDLLGILVSLLGELWCLVGV). Residues 320–333 (QRPPVSTPSQPLPS) show a composition bias toward pro residues. The disordered stretch occupies residues 320–343 (QRPPVSTPSQPLPSAPQSQSSAPS). Residues 334–343 (APQSQSSAPS) show a composition bias toward low complexity.

It belongs to the TMEM82 family.

The protein localises to the membrane. The polypeptide is Transmembrane protein 82 (TMEM82) (Homo sapiens (Human)).